Here is a 124-residue protein sequence, read N- to C-terminus: UPF0357 protein C1687.07 (124 aa).

A signal peptide spans 1-24 (MASFHIIVSYVTVVLAIIIAITFA).

Belongs to the UPF0357 family.

This chain is UPF0357 protein C1687.07, found in Schizosaccharomyces pombe (strain 972 / ATCC 24843) (Fission yeast).